The primary structure comprises 242 residues: MEFDPTKINISSIDHVTILQYIDEPNDIRLTVCIIQNINNITYYINITKINPHLANQFRTWKKRIAGRDYMTNLSRDTGIQQSKLTETIRNCQKNRNIYGLYIHYNLVINVVIDWITDVIVQSILRGLVNWYIANNNYTPNTPNNTTTISELDIIKILDKYEEVYRVSKEKECGICYEVVYSKRLENDRYFGLLDSCNHIFCITCINIWHRTRRETGASDNCPICRTRFRNITMSKFYKLVN.

Positions 21–131 (YIDEPNDIRL…QSILRGLVNW (111 aa)) constitute a KilA-N domain. Residues 173 to 226 (CGICYEVVYSKRLENDRYFGLLDSCNHIFCITCINIWHRTRRETGASDNCPICR) form an RING-type zinc finger.

The protein belongs to the orthopoxvirus OPG021 family.

The protein localises to the host cytoplasm. It catalyses the reaction S-ubiquitinyl-[E2 ubiquitin-conjugating enzyme]-L-cysteine + [acceptor protein]-L-lysine = [E2 ubiquitin-conjugating enzyme]-L-cysteine + N(6)-ubiquitinyl-[acceptor protein]-L-lysine.. RING-finger E3 ubiquitin ligase which catalyzes the formation of both 'Lys-48'- and 'Lys-63'-linked polyubiquitin chains. Plays an important role in virulence by acting as an anti-apoptotic factor. The chain is Host range factor p28 (OPG021) from Cowpox virus (strain Brighton Red) (CPV).